The sequence spans 285 residues: D-apionate oxidoisomerase (285 aa).

Residues 15 to 17 (GKM), glutamate 36, and aspartate 71 each bind NAD(+). Residues histidine 116 and glutamate 186 each contribute to the Zn(2+) site.

The protein belongs to the ApnO family. Requires Zn(2+) as cofactor.

It carries out the reaction D-apionate + NAD(+) = 3-oxoisoapionate + NADH + H(+). It participates in carbohydrate metabolism. In terms of biological role, involved in catabolism of D-apiose. Catalyzes the conversion of D-apionate to 3-oxo-isoapionate. In Pectobacterium atrosepticum (strain SCRI 1043 / ATCC BAA-672) (Erwinia carotovora subsp. atroseptica), this protein is D-apionate oxidoisomerase.